A 562-amino-acid chain; its full sequence is Urocanate hydratase (562 aa).

NAD(+) contacts are provided by residues 52-53 (GG), Q130, 176-178 (GMG), E196, R201, 242-243 (NA), 263-267 (QTSAH), 273-274 (YL), and Y322. Residue C410 is part of the active site. G492 contributes to the NAD(+) binding site.

This sequence belongs to the urocanase family. The cofactor is NAD(+).

It is found in the cytoplasm. The enzyme catalyses 4-imidazolone-5-propanoate = trans-urocanate + H2O. It participates in amino-acid degradation; L-histidine degradation into L-glutamate; N-formimidoyl-L-glutamate from L-histidine: step 2/3. Functionally, catalyzes the conversion of urocanate to 4-imidazolone-5-propionate. The chain is Urocanate hydratase from Shewanella pealeana (strain ATCC 700345 / ANG-SQ1).